A 509-amino-acid polypeptide reads, in one-letter code: 2,3-bisphosphoglycerate-independent phosphoglycerate mutase (509 aa).

Mn(2+) contacts are provided by D12 and S62. The active-site Phosphoserine intermediate is the S62. Substrate-binding positions include H123, 153 to 154 (RD), R185, R191, 260 to 263 (RPDR), and K333. Mn(2+)-binding residues include D400, H404, D441, H442, and H460.

Belongs to the BPG-independent phosphoglycerate mutase family. In terms of assembly, monomer. Requires Mn(2+) as cofactor.

The enzyme catalyses (2R)-2-phosphoglycerate = (2R)-3-phosphoglycerate. Its pathway is carbohydrate degradation; glycolysis; pyruvate from D-glyceraldehyde 3-phosphate: step 3/5. Its function is as follows. Catalyzes the interconversion of 2-phosphoglycerate and 3-phosphoglycerate. The chain is 2,3-bisphosphoglycerate-independent phosphoglycerate mutase from Clostridium botulinum (strain Langeland / NCTC 10281 / Type F).